The chain runs to 254 residues: 5'-nucleotidase SurE (254 aa).

Residues Asp8, Asp9, Ser40, and Asn93 each contribute to the a divalent metal cation site.

This sequence belongs to the SurE nucleotidase family. Requires a divalent metal cation as cofactor.

Its subcellular location is the cytoplasm. The enzyme catalyses a ribonucleoside 5'-phosphate + H2O = a ribonucleoside + phosphate. Nucleotidase that shows phosphatase activity on nucleoside 5'-monophosphates. The protein is 5'-nucleotidase SurE of Methylorubrum populi (strain ATCC BAA-705 / NCIMB 13946 / BJ001) (Methylobacterium populi).